A 707-amino-acid polypeptide reads, in one-letter code: Choline transporter-like protein 4 (707 aa).

Residues 1–32 (MGKKQKENEAYGNSAKYDPSFRGPIKNRGCTD) lie on the Cytoplasmic side of the membrane. The helical transmembrane segment at 33–53 (IICCVLFLVFILGYIVVGLVA) threads the bilayer. Residues 54–227 (WVYGDPRQVL…KIFEDFAQSW (174 aa)) lie on the Extracellular side of the membrane. N-linked (GlcNAc...) asparagine glycans are attached at residues Asn67, Asn185, Asn195, and Asn196. Residues 228 to 248 (YWILVALGVALVLSLLFILLL) form a helical membrane-spanning segment. The Cytoplasmic segment spans residues 249–250 (RL). Residues 251–271 (VAAPLVLLLIVGVLAVLAYGI) form a helical membrane-spanning segment. Residues 272–307 (YHCWQQYRELRDQGVSITQLGFTANLSAYQNVKETW) lie on the Extracellular side of the membrane. An N-linked (GlcNAc...) asparagine glycan is attached at Asn296. A helical transmembrane segment spans residues 308-328 (LAALIILAVLEGVLLLMLIFL). At 329 to 356 (RQRIRIAIALLKEASRAVGQMMSTMFYP) the chain is on the cytoplasmic side. A helical transmembrane segment spans residues 357 to 377 (LVTFVLLVICIGYWAVTALYL). Over 378–452 (ATSGQPQYVY…GILGLFWTVN (75 aa)) the chain is Extracellular. Asn391, Asn403, and Asn413 each carry an N-linked (GlcNAc...) asparagine glycan. A helical membrane pass occupies residues 453-473 (WVLALGQCVLAGAFASFYWAF). At 474–498 (HKPRDIPTFPLSSAFIRTLRYHTGS) the chain is on the cytoplasmic side. Residues 499 to 519 (LAFGALILTLVQIARVILEYI) traverse the membrane as a helical segment. At 520–557 (DHKLRGSQNPVARCIICCFKCCLWCLEKFIKFLNRNAY) the chain is on the extracellular side. The chain crosses the membrane as a helical span at residues 558–578 (IMIAIYGKNFCVSAKNAFMLL). Residues 579–594 (MRNVVRVVVLDKVTDL) lie on the Cytoplasmic side of the membrane. Residues 595-615 (LLFFGKLLVVGGVGVLSFFFF) traverse the membrane as a helical segment. The Extracellular segment spans residues 616-635 (SGRIKGLGKDFKNPDLNYYW). The helical transmembrane segment at 636–656 (LPIMTSIMGAYVIASGFFSVF) threads the bilayer. Residues 657-707 (GMCVDTLFLCFLEDLERNDGSQERPYYMPKALLKILGKKNEVPTGGKNRKK) are Cytoplasmic-facing.

The protein belongs to the CTL (choline transporter-like) family. Post-translationally, N-glycosylated; N-glycosylation of Asn-67 and Asn-391 is required for a proper thiamine pyrophosphate uptake. As to expression, highly expressed in intestine, kidney and stomach. Also expressed in testis and lung.

It is found in the membrane. The protein resides in the apical cell membrane. The catalysed reaction is choline(out) + n H(+)(in) = choline(in) + n H(+)(out). It catalyses the reaction thiamine diphosphate(out) = thiamine diphosphate(in). Its function is as follows. Choline transporter that plays a role in the choline-acetylcholine system and is required to the efferent innervation of hair cells in the olivocochlear bundle for the maintenance of physiological function of outer hair cells and the protection of hair cells from acoustic injury. Also described as a thiamine pyrophosphate transporter in colon, may mediate the absorption of microbiota-generated thiamine pyrophosphate and contribute to host thiamine (vitamin B1) homeostasis. The sequence is that of Choline transporter-like protein 4 from Rattus norvegicus (Rat).